The primary structure comprises 273 residues: 3-methyl-2-oxobutanoate hydroxymethyltransferase (273 aa).

Residues Asp-53 and Asp-92 each coordinate Mg(2+). Residues 53-54 (DS), Asp-92, and Lys-122 each bind 3-methyl-2-oxobutanoate. Glu-124 contacts Mg(2+). Glu-191 functions as the Proton acceptor in the catalytic mechanism.

It belongs to the PanB family. As to quaternary structure, homodecamer; pentamer of dimers. Mg(2+) serves as cofactor.

The protein localises to the cytoplasm. It carries out the reaction 3-methyl-2-oxobutanoate + (6R)-5,10-methylene-5,6,7,8-tetrahydrofolate + H2O = 2-dehydropantoate + (6S)-5,6,7,8-tetrahydrofolate. It functions in the pathway cofactor biosynthesis; (R)-pantothenate biosynthesis; (R)-pantoate from 3-methyl-2-oxobutanoate: step 1/2. In terms of biological role, catalyzes the reversible reaction in which hydroxymethyl group from 5,10-methylenetetrahydrofolate is transferred onto alpha-ketoisovalerate to form ketopantoate. The polypeptide is 3-methyl-2-oxobutanoate hydroxymethyltransferase (Bacteroides thetaiotaomicron (strain ATCC 29148 / DSM 2079 / JCM 5827 / CCUG 10774 / NCTC 10582 / VPI-5482 / E50)).